A 316-amino-acid polypeptide reads, in one-letter code: Pantothenate kinase (316 aa).

Residue 95–102 participates in ATP binding; sequence GSVAVGKS.

Belongs to the prokaryotic pantothenate kinase family.

It is found in the cytoplasm. It carries out the reaction (R)-pantothenate + ATP = (R)-4'-phosphopantothenate + ADP + H(+). Its pathway is cofactor biosynthesis; coenzyme A biosynthesis; CoA from (R)-pantothenate: step 1/5. In Serratia proteamaculans (strain 568), this protein is Pantothenate kinase.